A 104-amino-acid chain; its full sequence is Pterin-4-alpha-carbinolamine dehydratase (104 aa).

Position 2 is an N-acetylalanine (alanine 2). Substrate contacts are provided by residues 61-63 (DHH) and 78-81 (STHE).

This sequence belongs to the pterin-4-alpha-carbinolamine dehydratase family. In terms of assembly, homotetramer and homodimer. Heterotetramer with HNF1A; formed by a dimer of dimers. Interacts with HNF1B (via HNF-p1 domain); the interaction increases HNF1B transactivation activity.

It is found in the cytoplasm. It localises to the nucleus. The enzyme catalyses (4aS,6R)-4a-hydroxy-L-erythro-5,6,7,8-tetrahydrobiopterin = (6R)-L-erythro-6,7-dihydrobiopterin + H2O. Involved in tetrahydrobiopterin biosynthesis. Seems to both prevent the formation of 7-pterins and accelerate the formation of quinonoid-BH2. Coactivator for HNF1A-dependent transcription. Regulates the dimerization of homeodomain protein HNF1A and enhances its transcriptional activity. Also acts as a coactivator for HNF1B-dependent transcription. This Rattus norvegicus (Rat) protein is Pterin-4-alpha-carbinolamine dehydratase (Pcbd1).